The following is a 774-amino-acid chain: Probable E3 ubiquitin-protein ligase HECTD2 (774 aa).

Positions 1–51 (MSEAARDLSPGAPPAVAAAAPEERKGKEPEREKLPPIVTAGAAAGLDRGSK) are disordered. At Ser-9 the chain carries Phosphoserine. Residues 21–34 (PEERKGKEPEREKL) show a composition bias toward basic and acidic residues. Residues 435–774 (KRADLKKKLK…ISNSEGFGLE (340 aa)) form the HECT domain. Catalysis depends on Cys-742, which acts as the Glycyl thioester intermediate.

It catalyses the reaction S-ubiquitinyl-[E2 ubiquitin-conjugating enzyme]-L-cysteine + [acceptor protein]-L-lysine = [E2 ubiquitin-conjugating enzyme]-L-cysteine + N(6)-ubiquitinyl-[acceptor protein]-L-lysine.. The protein operates within protein modification; protein ubiquitination. E3 ubiquitin-protein ligase which accepts ubiquitin from an E2 ubiquitin-conjugating enzyme in the form of a thioester and then directly transfers the ubiquitin to targeted substrates. This chain is Probable E3 ubiquitin-protein ligase HECTD2 (Hectd2), found in Mus musculus (Mouse).